A 459-amino-acid chain; its full sequence is Cysteine--tRNA ligase (459 aa).

Zn(2+) is bound at residue Cys27. The short motif at 29-39 (VTVYDDCHIGH) is the 'HIGH' region element. Zn(2+) is bound by residues Cys208, His233, and Glu237. The short motif at 265–269 (KMSKS) is the 'KMSKS' region element. Residue Lys268 coordinates ATP.

Belongs to the class-I aminoacyl-tRNA synthetase family. In terms of assembly, monomer. It depends on Zn(2+) as a cofactor.

The protein localises to the cytoplasm. The enzyme catalyses tRNA(Cys) + L-cysteine + ATP = L-cysteinyl-tRNA(Cys) + AMP + diphosphate. The sequence is that of Cysteine--tRNA ligase from Francisella tularensis subsp. novicida (strain U112).